We begin with the raw amino-acid sequence, 553 residues long: CTP synthase (553 aa).

Residues 1-275 (MPTETEYDPS…DQYVMEQFDM (275 aa)) form an amidoligase domain region. S24 contributes to the CTP binding site. A UTP-binding site is contributed by S24. ATP is bound at residue 25-30 (GLGKGI). Y65 contributes to the L-glutamine binding site. D82 provides a ligand contact to ATP. Residues D82 and E150 each contribute to the Mg(2+) site. CTP is bound by residues 157–159 (DIE), 196–201 (KTKPTQ), and K232. UTP-binding positions include 196-201 (KTKPTQ) and K232. Positions 308–540 (KYALEDAYMS…LDAVLERADV (233 aa)) constitute a Glutamine amidotransferase type-1 domain. An L-glutamine-binding site is contributed by G362. The active-site Nucleophile; for glutamine hydrolysis is the C389. L-glutamine contacts are provided by residues 390–393 (LGFQ), E413, and R470. Residues H513 and E515 contribute to the active site.

This sequence belongs to the CTP synthase family. As to quaternary structure, homotetramer.

The catalysed reaction is UTP + L-glutamine + ATP + H2O = CTP + L-glutamate + ADP + phosphate + 2 H(+). It catalyses the reaction L-glutamine + H2O = L-glutamate + NH4(+). The enzyme catalyses UTP + NH4(+) + ATP = CTP + ADP + phosphate + 2 H(+). Its pathway is pyrimidine metabolism; CTP biosynthesis via de novo pathway; CTP from UDP: step 2/2. With respect to regulation, allosterically activated by GTP, when glutamine is the substrate; GTP has no effect on the reaction when ammonia is the substrate. The allosteric effector GTP functions by stabilizing the protein conformation that binds the tetrahedral intermediate(s) formed during glutamine hydrolysis. Inhibited by the product CTP, via allosteric rather than competitive inhibition. Its function is as follows. Catalyzes the ATP-dependent amination of UTP to CTP with either L-glutamine or ammonia as the source of nitrogen. Regulates intracellular CTP levels through interactions with the four ribonucleotide triphosphates. In Halobacterium salinarum (strain ATCC 29341 / DSM 671 / R1), this protein is CTP synthase.